The following is a 276-amino-acid chain: Orotidine 5'-phosphate decarboxylase (276 aa).

The active-site Proton donor is the lysine 95.

It belongs to the OMP decarboxylase family. Type 2 subfamily.

It catalyses the reaction orotidine 5'-phosphate + H(+) = UMP + CO2. Its pathway is pyrimidine metabolism; UMP biosynthesis via de novo pathway; UMP from orotate: step 2/2. The sequence is that of Orotidine 5'-phosphate decarboxylase (pyrF) from Mycolicibacterium smegmatis (strain ATCC 700084 / mc(2)155) (Mycobacterium smegmatis).